Here is a 258-residue protein sequence, read N- to C-terminus: Nuclear egress protein 2 (258 aa).

The Perinuclear space segment spans residues 1 to 228 (MLKEKMYDEL…TVPIFARRNN (228 aa)). A helical membrane pass occupies residues 229 to 249 (ILCGFLVAALLIVCYVIFKEF). The Nuclear portion of the chain corresponds to 250-258 (ALSADFSAV).

This sequence belongs to the herpesviridae NEC2 protein family. In terms of assembly, forms a heterohexameric complex with NEC1. In terms of processing, phosphorylated.

The protein localises to the host nucleus inner membrane. Functionally, plays an essential role in virion nuclear egress, the first step of virion release from infected cell. Within the host nucleus, NEC1 interacts with the newly formed capsid through the vertexes and directs it to the inner nuclear membrane by associating with NEC2. Induces the budding of the capsid at the inner nuclear membrane as well as its envelopment into the perinuclear space. There, the NEC1/NEC2 complex promotes the fusion of the enveloped capsid with the outer nuclear membrane and the subsequent release of the viral capsid into the cytoplasm where it will reach the secondary budding sites in the host Golgi or trans-Golgi network. This is Nuclear egress protein 2 from Homo sapiens (Human).